Reading from the N-terminus, the 211-residue chain is Large ribosomal subunit protein uL3 (211 aa).

It belongs to the universal ribosomal protein uL3 family. As to quaternary structure, part of the 50S ribosomal subunit. Forms a cluster with proteins L14 and L19.

In terms of biological role, one of the primary rRNA binding proteins, it binds directly near the 3'-end of the 23S rRNA, where it nucleates assembly of the 50S subunit. In Halothermothrix orenii (strain H 168 / OCM 544 / DSM 9562), this protein is Large ribosomal subunit protein uL3.